Consider the following 158-residue polypeptide: 2-amino-4-hydroxy-6-hydroxymethyldihydropteridine pyrophosphokinase (158 aa).

Belongs to the HPPK family.

The enzyme catalyses 6-hydroxymethyl-7,8-dihydropterin + ATP = (7,8-dihydropterin-6-yl)methyl diphosphate + AMP + H(+). Its pathway is cofactor biosynthesis; tetrahydrofolate biosynthesis; 2-amino-4-hydroxy-6-hydroxymethyl-7,8-dihydropteridine diphosphate from 7,8-dihydroneopterin triphosphate: step 4/4. Functionally, catalyzes the transfer of pyrophosphate from adenosine triphosphate (ATP) to 6-hydroxymethyl-7,8-dihydropterin, an enzymatic step in folate biosynthesis pathway. This chain is 2-amino-4-hydroxy-6-hydroxymethyldihydropteridine pyrophosphokinase (folK), found in Methylorubrum extorquens (strain ATCC 14718 / DSM 1338 / JCM 2805 / NCIMB 9133 / AM1) (Methylobacterium extorquens).